The sequence spans 471 residues: Ribulose bisphosphate carboxylase large chain (471 aa).

The residue at position 5 (Lys-5) is an N6,N6,N6-trimethyllysine. Residues Asn-114 and Thr-164 each contribute to the substrate site. Catalysis depends on Lys-166, which acts as the Proton acceptor. Position 168 (Lys-168) interacts with substrate. Lys-192, Asp-194, and Glu-195 together coordinate Mg(2+). Lys-192 carries the post-translational modification N6-carboxylysine. The Proton acceptor role is filled by His-285. Substrate is bound by residues Arg-286, His-318, and Ser-370.

Belongs to the RuBisCO large chain family. Type I subfamily. Heterohexadecamer of 8 large chains and 8 small chains; disulfide-linked. The disulfide link is formed within the large subunit homodimers. The cofactor is Mg(2+). Post-translationally, the disulfide bond which can form in the large chain dimeric partners within the hexadecamer appears to be associated with oxidative stress and protein turnover.

The protein resides in the plastid. Its subcellular location is the chloroplast. The enzyme catalyses 2 (2R)-3-phosphoglycerate + 2 H(+) = D-ribulose 1,5-bisphosphate + CO2 + H2O. It catalyses the reaction D-ribulose 1,5-bisphosphate + O2 = 2-phosphoglycolate + (2R)-3-phosphoglycerate + 2 H(+). Its function is as follows. RuBisCO catalyzes two reactions: the carboxylation of D-ribulose 1,5-bisphosphate, the primary event in carbon dioxide fixation, as well as the oxidative fragmentation of the pentose substrate in the photorespiration process. Both reactions occur simultaneously and in competition at the same active site. This is Ribulose bisphosphate carboxylase large chain from Deppea grandiflora.